A 183-amino-acid chain; its full sequence is Apo-citrate lyase phosphoribosyl-dephospho-CoA transferase (183 aa).

The protein belongs to the CitX family.

The catalysed reaction is apo-[citrate lyase ACP] + 2'-(5''-triphospho-alpha-D-ribosyl)-3'-dephospho-CoA = holo-[citrate lyase ACP] + diphosphate. Its function is as follows. Transfers 2-(5''-triphosphoribosyl)-3'-dephosphocoenzyme-A on a serine residue to the apo-acyl carrier protein (gamma chain) of the citrate lyase to yield holo-acyl carrier protein. The protein is Apo-citrate lyase phosphoribosyl-dephospho-CoA transferase of Citrobacter koseri (strain ATCC BAA-895 / CDC 4225-83 / SGSC4696).